The following is a 566-amino-acid chain: Urease subunit alpha (566 aa).

The Urease domain occupies 128 to 566; the sequence is GGVDTHIHFI…LPMAQRYFLF (439 aa). The Ni(2+) site is built by His133, His135, and Lys216. Position 216 is an N6-carboxylysine (Lys216). His218 contributes to the substrate binding site. The Ni(2+) site is built by His245 and His271. The active-site Proton donor is the His319. Asp359 is a Ni(2+) binding site.

Belongs to the metallo-dependent hydrolases superfamily. Urease alpha subunit family. May form a heterohexamer of 3 UreC (alpha) and 3 UreAB (gamma/beta) subunits. May also form a heterotrimer of UreA (gamma), UreB (beta) and UreC (alpha) subunits. Three heterotrimers associate to form the active enzyme. Requires Ni cation as cofactor. Carboxylation allows a single lysine to coordinate two nickel ions.

The protein resides in the cytoplasm. The enzyme catalyses urea + 2 H2O + H(+) = hydrogencarbonate + 2 NH4(+). It functions in the pathway nitrogen metabolism; urea degradation; CO(2) and NH(3) from urea (urease route): step 1/1. The polypeptide is Urease subunit alpha (Pseudomonas savastanoi pv. phaseolicola (strain 1448A / Race 6) (Pseudomonas syringae pv. phaseolicola (strain 1448A / Race 6))).